The sequence spans 450 residues: Protein tweety homolog 1 (450 aa).

Residues 1–43 (MGAPPGYRPSAWVHLLHQLPRADFQLRPVPSGFAPRDQEYQQA) are Extracellular-facing. A helical transmembrane segment spans residues 44–64 (LLLVAALAGLGLGLSLIFIAV). Topologically, residues 65-88 (YLIRFCCCRPPEPHGAKSPPPGGG) are cytoplasmic. A helical transmembrane segment spans residues 89-109 (CVTWSCIAALLVGCAGIGIGF). Residues 110–214 (YGNSETSDGV…DVTFVEEYRW (105 aa)) are Extracellular-facing. Asn-130 carries N-linked (GlcNAc...) asparagine glycosylation. A helical transmembrane segment spans residues 215-235 (LAYVLLLLLVLLVCLFTLLGL). Over 236–240 (AKQSK) the chain is Cytoplasmic. Residues 241-261 (WLVVVMTAMSLLVLVLSWGSM) form a helical membrane-spanning segment. The Extracellular portion of the chain corresponds to 262–390 (GLEAATAVGL…LRGLCEDALE (129 aa)). Disulfide bonds link Cys-275-Cys-385 and Cys-303-Cys-370. Residues Asn-284 and Asn-355 are each glycosylated (N-linked (GlcNAc...) asparagine). The chain crosses the membrane as a helical span at residues 391 to 411 (GLLFLMLFSLLSAGALATTLC). Residues 412-450 (SLPRAWALFPPSDDYDDTDDDDPFNPQESKRFVQWQSSI) lie on the Cytoplasmic side of the membrane. The disordered stretch occupies residues 428–450 (DTDDDDPFNPQESKRFVQWQSSI). Ser-440 bears the Phosphoserine mark.

This sequence belongs to the tweety family. As to quaternary structure, homotetramer; disulfide-linked. Homodimer. N-glycosylated. Contains high-mannose, hybrid and complex oligosaccharides. Expressed in the astrocytes (at protein level). Restricted mainly to neural tissues. Strongly expressed in brain and eye.

The protein resides in the cell membrane. It catalyses the reaction chloride(in) = chloride(out). It carries out the reaction L-glutamate(out) = L-glutamate(in). Its activity is regulated as follows. Inhibited by (4-[(2-butyl-6,7-dichloro-2- cyclopentyl-2,3-dihydro-1-oxo-1H-inden-5-yl)oxy]butanoic acid). In terms of biological role, calcium-independent, swelling-dependent volume-regulated anion channel (VRAC-swell) which plays a pivotal role in the process of regulatory volume decrease (RVD) in the brain through the efflux of anions like chloride and organic osmolytes like glutamate. The polypeptide is Protein tweety homolog 1 (Ttyh1) (Mus musculus (Mouse)).